The sequence spans 161 residues: Cuticle protein 16.8 (161 aa).

Q1 bears the Pyrrolidone carboxylic acid mark. A compositionally biased stretch (pro residues) spans 1–10 (QSEPAGPPQP). Disordered stretches follow at residues 1-44 (QSEP…YSYT) and 67-103 (ETNEPGTKTSNPADAQIVSNAATDSYSPSPASSPAKP). Residues 8-74 (PQPYTFSYDN…TVETNEPGTK (67 aa)) form the Chitin-binding type R&amp;R domain. Residues 67 to 86 (ETNEPGTKTSNPADAQIVSN) are compositionally biased toward polar residues. Residues 87 to 103 (AATDSYSPSPASSPAKP) show a composition bias toward low complexity.

Component of the cuticle of the tick. Binds chitin. This is Cuticle protein 16.8 from Ixodes ricinus (Common tick).